Reading from the N-terminus, the 284-residue chain is Nucleotide-binding protein Sbal195_0713 (284 aa).

8 to 15 provides a ligand contact to ATP; the sequence is GRSGSGKS. 56–59 serves as a coordination point for GTP; that stretch reads DVRN.

Belongs to the RapZ-like family.

Displays ATPase and GTPase activities. The chain is Nucleotide-binding protein Sbal195_0713 from Shewanella baltica (strain OS195).